Reading from the N-terminus, the 453-residue chain is uncharacterized protein (453 aa).

Disordered stretches follow at residues 183-210 (GNGR…RSLS) and 428-453 (PDSM…QYSK). Positions 198-207 (TKAHNYKTRR) are enriched in basic residues. The segment covering 433 to 453 (HPPTFSKNNTSSNPKSHQYSK) has biased composition (polar residues).

This is an uncharacterized protein from Saccharomyces cerevisiae (strain ATCC 204508 / S288c) (Baker's yeast).